Consider the following 238-residue polypeptide: Purine nucleoside phosphorylase DeoD-type (238 aa).

A purine D-ribonucleoside is bound at residue His4. Residues Gly20, Arg24, Arg43, and 87-90 each bind phosphate; that span reads RVGS. Residues 179-181 and 203-204 contribute to the a purine D-ribonucleoside site; these read EME and SD. The active-site Proton donor is the Asp204.

This sequence belongs to the PNP/UDP phosphorylase family. In terms of assembly, homohexamer; trimer of homodimers.

The enzyme catalyses a purine D-ribonucleoside + phosphate = a purine nucleobase + alpha-D-ribose 1-phosphate. The catalysed reaction is a purine 2'-deoxy-D-ribonucleoside + phosphate = a purine nucleobase + 2-deoxy-alpha-D-ribose 1-phosphate. Functionally, catalyzes the reversible phosphorolytic breakdown of the N-glycosidic bond in the beta-(deoxy)ribonucleoside molecules, with the formation of the corresponding free purine bases and pentose-1-phosphate. This chain is Purine nucleoside phosphorylase DeoD-type, found in Mannheimia succiniciproducens (strain KCTC 0769BP / MBEL55E).